The primary structure comprises 925 residues: Nonribosomal peptide synthetase apvA (925 aa).

Residues 15-436 (AREDSGHVVV…TGRAKENMII (422 aa)) are adenylation (A) domain. Residues 564-644 (EPQNDLEKTL…DLATALEKLQ (81 aa)) enclose the Carrier domain. The residue at position 601 (Ser-601) is an O-(pantetheine 4'-phosphoryl)serine. Residues 663-909 (PLWLVHPGAG…HYSMIGPDHV (247 aa)) form a thioesterase (TE) domain region.

It belongs to the NRP synthetase family. In terms of tissue distribution, apvA specifically produces aspulvinone E in hyphea, in contrast to melA which produces aspulvinone E in conidia where it is converted to UV-protective Asp-melanin.

The catalysed reaction is 2 3-(4-hydroxyphenyl)pyruvate + AH2 + 2 ATP + O2 = aspulvinone E + A + 2 AMP + CO2 + 2 diphosphate + H2O + H(+). It participates in secondary metabolite biosynthesis. Its function is as follows. Nonribosomal peptide synthetase; part of the gene cluster that mediates the biosynthesis of aspulvinones. The nonribosomal peptide synthetase apvA is responsible for the production of aspulvinone E, the core structure of aspulvinones. ApvA first activates 4-hydroxyphenylpyruvate (HPPA) through its A domain to AMP-HPPA. The HPPA unit is then loaded to the T domain and eventually transferred to the TE domain. Upon loading of another HPPA unit to the T domain, the TE domain promotes the enolate formation on the unit attached. The next step involves head to tail Claisen condensation, followed by the keto-enol tautermerization and a nucleophilic attack on the carbonyl carbon to yield the furanone partial structure. A spontaneous oxidation at the beta-carbon of the thioester might occur in aerobic condition. The TE domain then catalyzes the hydrolysis of the thioester, followed by spontaneous decarboxylation, dehydroxylation and keto-enol tautermerization to give the aspulvinone core. Aspulvinone E is highly unstable and converted to isoaspulvinone E in the presence of light. The structural diversity of the aspulvinones suggests that other tailoring enzymes are involved and have still to be identified. The protein is Nonribosomal peptide synthetase apvA of Aspergillus terreus (strain NIH 2624 / FGSC A1156).